Reading from the N-terminus, the 773-residue chain is Protein YhgF (773 aa).

The S1 motif domain occupies 651 to 720 (GMILEGAVTN…QRKRIALTMR (70 aa)). Residues 721–773 (LDEQPGETNARRGGGNERPQNNRPAAKPRGREAQPAGNSAMMDALAAAMGKKR) are disordered.

The protein is Protein YhgF (yhgF) of Escherichia coli (strain K12).